A 469-amino-acid polypeptide reads, in one-letter code: 3-isopropylmalate dehydratase large subunit (469 aa).

[4Fe-4S] cluster contacts are provided by Cys347, Cys410, and Cys413.

Belongs to the aconitase/IPM isomerase family. LeuC type 1 subfamily. Heterodimer of LeuC and LeuD. The cofactor is [4Fe-4S] cluster.

The catalysed reaction is (2R,3S)-3-isopropylmalate = (2S)-2-isopropylmalate. The protein operates within amino-acid biosynthesis; L-leucine biosynthesis; L-leucine from 3-methyl-2-oxobutanoate: step 2/4. Catalyzes the isomerization between 2-isopropylmalate and 3-isopropylmalate, via the formation of 2-isopropylmaleate. This is 3-isopropylmalate dehydratase large subunit from Burkholderia thailandensis (strain ATCC 700388 / DSM 13276 / CCUG 48851 / CIP 106301 / E264).